A 338-amino-acid chain; its full sequence is MO25-like protein 2 (338 aa).

This sequence belongs to the Mo25 family.

The protein localises to the cytoplasm. The protein resides in the cytoskeleton. It localises to the spindle pole. Functionally, regulates asymmetric cell division in Q.p neuroblast lineage. Plays a role in cell shedding during embryogenesis. The sequence is that of MO25-like protein 2 (mop-25.2) from Caenorhabditis elegans.